The sequence spans 591 residues: Homeobox domain-containing transcription factor HOB1 (591 aa).

Residues 1-15 (MEGKNEDMHTPRGPE) are compositionally biased toward basic and acidic residues. 2 disordered regions span residues 1–37 (MEGK…DMLG) and 148–168 (IAGP…RSPA). Residues 176-223 (IAILRESYARNPNPDRKELERLAARTGRPWNKIREYFRQRRNKLRGLE) constitute a DNA-binding region (homeobox). Disordered regions lie at residues 420 to 463 (DAGL…PRES) and 543 to 563 (DAIE…ALTE). The span at 427-441 (QGEEDQPPTVEESDQ) shows a compositional bias: acidic residues. The segment covering 543–560 (DAIERRNAGESKRKRDDA) has biased composition (basic and acidic residues).

The protein localises to the nucleus. Functionally, general stress-responsive transcription factor that governs multiple stress responses and adaptations. Plays a key role in virulence. Mediates the expression of LAC1, which is the major laccase involved in melanin synthesis. Positively regulates BZP4 induction under conditions of nutrient starvation and basal expression levels of MBS1 and USV101, 3 major transcription factors that independently contribute to melanin production. Also acts as a key regulator of ergosterol gene expression. This Cryptococcus neoformans var. grubii serotype A (strain H99 / ATCC 208821 / CBS 10515 / FGSC 9487) (Filobasidiella neoformans var. grubii) protein is Homeobox domain-containing transcription factor HOB1.